Reading from the N-terminus, the 449-residue chain is Elongation factor 1-alpha (449 aa).

The 226-residue stretch at 5 to 230 (KVHINIVVIG…DQINEPKRPS (226 aa)) folds into the tr-type G domain. The tract at residues 14-21 (GHVDSGKS) is G1. Residue 14–21 (GHVDSGKS) participates in GTP binding. At K55 the chain carries N6,N6-dimethyllysine. Residues 70-74 (GITID) are G2. At K79 the chain carries N6,N6,N6-trimethyllysine. Residues 91–94 (DAPG) are G3. Residues 91–95 (DAPGH) and 153–156 (NKMD) contribute to the GTP site. The tract at residues 153–156 (NKMD) is G4. K187 bears the N6,N6,N6-trimethyllysine mark. The segment at 194–196 (SGF) is G5. K261 carries the N6-methyllysine modification. A 5-glutamyl glycerylphosphorylethanolamine modification is found at E289. K306 carries the N6,N6,N6-trimethyllysine modification. E362 carries the post-translational modification 5-glutamyl glycerylphosphorylethanolamine. K396 carries the N6,N6,N6-trimethyllysine modification.

It belongs to the TRAFAC class translation factor GTPase superfamily. Classic translation factor GTPase family. EF-Tu/EF-1A subfamily.

Its subcellular location is the cytoplasm. In terms of biological role, this protein promotes the GTP-dependent binding of aminoacyl-tRNA to the A-site of ribosomes during protein biosynthesis. This is Elongation factor 1-alpha from Daucus carota (Wild carrot).